A 473-amino-acid chain; its full sequence is MSDGTGVRGRTMAEKIWEEHVVRRADGEPDLLYIDLHLIHEVTSPQAFDGLRLAGRRVRRPDLTIATEDHNVPTTDIDKPIADPVSRTQVETLRRNCAEFGIRLHPMGDREQGIVHVIGPQLGLTQPGMTIVCGDSHTSTHGAFGALAFGIGTSEVEHVLATQTLPQYKPKTMAVTVDGTLRPGVTSKDIILALIAKIGTGGGQGHVIEYRGEAIRALSMEARMTICNMSIEAGARAGMIAPDDTTFAYLEGRPHAPKGRDWEAALEYWRSLPTDPDAVFDEEVLLDAGSLSPYVTWGTNPGQGAPLDSVVPDPATFSDPIERAAAERALAYMDLQPGTPLREIRVDTVFIGSCTNGRIEDLRAAASVLQGRKVAPGVRVLVVPGSMAVKAQAEAEGLDRIFRDAGAEWRNAGCSMCLGMNPDQLAPGQRSASTSNRNFEGRQGRGGRTHLVSPLVAAATAVAGHLAAPSDLD.

The [4Fe-4S] cluster site is built by Cys-354, Cys-414, and Cys-417. Residues 425-448 (LAPGQRSASTSNRNFEGRQGRGGR) form a disordered region.

The protein belongs to the aconitase/IPM isomerase family. LeuC type 1 subfamily. Heterodimer of LeuC and LeuD. [4Fe-4S] cluster serves as cofactor.

It carries out the reaction (2R,3S)-3-isopropylmalate = (2S)-2-isopropylmalate. The protein operates within amino-acid biosynthesis; L-leucine biosynthesis; L-leucine from 3-methyl-2-oxobutanoate: step 2/4. In terms of biological role, catalyzes the isomerization between 2-isopropylmalate and 3-isopropylmalate, via the formation of 2-isopropylmaleate. This chain is 3-isopropylmalate dehydratase large subunit, found in Acidothermus cellulolyticus (strain ATCC 43068 / DSM 8971 / 11B).